Reading from the N-terminus, the 118-residue chain is UPF0102 protein Franean1_1156 (118 aa).

The protein belongs to the UPF0102 family.

This chain is UPF0102 protein Franean1_1156, found in Parafrankia sp. (strain EAN1pec).